Reading from the N-terminus, the 378-residue chain is Rhodopsin (378 aa).

Over 1-53 (MMSIASGPSHAAYTWASQGGGFGNQTVVDKVPPEMLHMVDAHWYQFPPMNPLW) the chain is Extracellular. An N-linked (GlcNAc...) asparagine glycan is attached at Asn-24. A helical membrane pass occupies residues 54-78 (HALLGFVIGVLGVISVIGNGMVIYI). Over 79 to 90 (FTTTKSLRTPSN) the chain is Cytoplasmic. Residues 91 to 115 (LLVVNLAISDFLMMLCMSPAMVINC) form a helical membrane-spanning segment. Topologically, residues 116-130 (YYETWVLGPLFCELY) are extracellular. Cysteines 127 and 204 form a disulfide. A helical membrane pass occupies residues 131–150 (GLAGSLFGCASIWTMTMIAF). At 151 to 169 (DRYNVIVKGLSAKPMTING) the chain is on the cytoplasmic side. The chain crosses the membrane as a helical span at residues 170-193 (ALIRILTIWFFTLAWTIAPMFGWN). Residues 194–217 (RYVPEGNMTACGTDYLTKDLFSRS) lie on the Extracellular side of the membrane. An N-linked (GlcNAc...) asparagine glycan is attached at Asn-200. The chain crosses the membrane as a helical span at residues 218–245 (YILIYSIFVYFTPLFLIIYSYFFIIQAV). The Cytoplasmic portion of the chain corresponds to 246–280 (AAHEKNMREQAKKMNVASLRSAENQSTSAECKLAK). Residues 281–304 (VALMTISLWFMAWTPYLVINYSGI) traverse the membrane as a helical segment. Residues 305 to 311 (FETTKIS) lie on the Extracellular side of the membrane. The helical transmembrane segment at 312-336 (PLFTIWGSLFAKANAVYNPIVYGIS) threads the bilayer. At Lys-323 the chain carries N6-(retinylidene)lysine. Residues 337 to 378 (HPKYRAALFQKFPSLACTTEPTGADTMSTTTTVTEGNEKPAA) are Cytoplasmic-facing.

The protein belongs to the G-protein coupled receptor 1 family. Opsin subfamily. In terms of processing, phosphorylated on some or all of the serine and threonine residues present in the C-terminal region.

It localises to the membrane. In terms of biological role, visual pigments are the light-absorbing molecules that mediate vision. They consist of an apoprotein, opsin, covalently linked to cis-retinal. The polypeptide is Rhodopsin (Camponotus atriceps (Florida carpenter ant)).